Reading from the N-terminus, the 598-residue chain is Arginine--tRNA ligase (598 aa).

The short motif at 131 to 141 (ANPTGPMHVGH) is the 'HIGH' region element. A disordered region spans residues 288–309 (KLPPPKSKKGQPPPQPQPDEEG).

Belongs to the class-I aminoacyl-tRNA synthetase family. As to quaternary structure, monomer.

The protein resides in the cytoplasm. The catalysed reaction is tRNA(Arg) + L-arginine + ATP = L-arginyl-tRNA(Arg) + AMP + diphosphate. This Anaeromyxobacter dehalogenans (strain 2CP-1 / ATCC BAA-258) protein is Arginine--tRNA ligase.